A 222-amino-acid polypeptide reads, in one-letter code: Superoxide dismutase [Mn], mitochondrial (222 aa).

The N-terminal 24 residues, 1 to 24, are a transit peptide targeting the mitochondrion; the sequence is MLCRAACSAGRRLGPAASTAGSRH. Mn(2+) is bound at residue H50. Y58 is subject to 3'-nitrotyrosine. K68 and K75 each carry N6-acetyllysine; alternate. N6-succinyllysine; alternate occurs at positions 68 and 75. Mn(2+) is bound at residue H98. K114 bears the N6-acetyllysine mark. N6-acetyllysine; alternate occurs at positions 122 and 130. N6-succinyllysine; alternate is present on residues K122 and K130. Mn(2+)-binding residues include D183 and H187. An N6-acetyllysine modification is found at K202.

It belongs to the iron/manganese superoxide dismutase family. As to quaternary structure, homotetramer. Mn(2+) serves as cofactor. Nitrated under oxidative stress. Nitration coupled with oxidation inhibits the catalytic activity. In terms of processing, acetylation at Lys-122 decreases enzymatic activity. Deacetylated by SIRT3 upon exposure to ionizing radiations or after long fasting. Post-translationally, polyubiquitinated; leading to proteasomal degradation. Deubiquitinated by USP36 which increases protein stability.

It localises to the mitochondrion matrix. It carries out the reaction 2 superoxide + 2 H(+) = H2O2 + O2. Its function is as follows. Destroys superoxide anion radicals which are normally produced within the cells and which are toxic to biological systems. This Rattus norvegicus (Rat) protein is Superoxide dismutase [Mn], mitochondrial (Sod2).